The chain runs to 491 residues: Ran-binding protein 3 (491 aa).

The segment covering M1–P10 has biased composition (basic and acidic residues). Disordered stretches follow at residues M1–E177 and V255–S292. A2 carries the N-acetylalanine modification. K9 and K21 each carry N6-acetyllysine. Residues S32, S33, and S40 each carry the phosphoserine modification. Residues P49–S57 carry the Nuclear localization signal motif. Positions V51–S67 are enriched in basic and acidic residues. T56 is modified (phosphothreonine). At S58 the chain carries Phosphoserine. Composition is skewed to polar residues over residues V111–V124 and P133–E149. A Phosphoserine modification is found at S146. Over residues E152–P162 the composition is skewed to basic and acidic residues. S257, S277, S279, and S296 each carry phosphoserine. The segment covering A275–A286 has biased composition (low complexity). The 141-residue stretch at K302–E442 folds into the RanBD1 domain. Residues R438–T491 form a disordered region. The residue at position 463 (S463) is a Phosphoserine.

As to quaternary structure, interacts with CHC1 in a Ran-stimulated manner. Interacts with XPO1. Interacts (via its C-terminal R domain) with SMAD2 (dephosphorylated form via its MH1 and MH2 domains); the interaction results in the nuclear export of SMAD2 and termination of the TGF-beta signaling. Interacts (via its C-terminal R domain) with SMAD3 (dephosphorylated form via its MH1 domain); the interaction results in the nuclear export of SMAD3 and termination of the TGF-beta signaling. Post-translationally, phosphorylation at Ser-58 promotes its import into the nucleus.

The protein localises to the cytoplasm. Its subcellular location is the nucleus. Its function is as follows. Acts as a cofactor for XPO1/CRM1-mediated nuclear export, perhaps as export complex scaffolding protein. Bound to XPO1/CRM1, stabilizes the XPO1/CRM1-cargo interaction. In the absence of Ran-bound GTP prevents binding of XPO1/CRM1 to the nuclear pore complex. Binds to CHC1/RCC1 and increases the guanine nucleotide exchange activity of CHC1/RCC1. Recruits XPO1/CRM1 to CHC1/RCC1 in a Ran-dependent manner. Negative regulator of TGF-beta signaling through interaction with the R-SMAD proteins, SMAD2 and SMAD3, and mediating their nuclear export. This is Ran-binding protein 3 (Ranbp3) from Mus musculus (Mouse).